A 1385-amino-acid polypeptide reads, in one-letter code: DNA-directed RNA polymerase subunit beta (1385 aa).

This sequence belongs to the RNA polymerase beta chain family. The RNAP catalytic core consists of 2 alpha, 1 beta, 1 beta' and 1 omega subunit. When a sigma factor is associated with the core the holoenzyme is formed, which can initiate transcription.

The catalysed reaction is RNA(n) + a ribonucleoside 5'-triphosphate = RNA(n+1) + diphosphate. In terms of biological role, DNA-dependent RNA polymerase catalyzes the transcription of DNA into RNA using the four ribonucleoside triphosphates as substrates. The protein is DNA-directed RNA polymerase subunit beta of Sulfurovum sp. (strain NBC37-1).